Consider the following 333-residue polypeptide: MDLINSTDYLINASTLVRNSTQFLAPASKMIIALSLYISSIIGTITNGLYLWVLRFKMKQTVNTLLFFHLILSYFISTMILPFMATSQLQDNHWNFGTALCKVFNGTLSLGMFTSVFFLSAIGLDRYLLTLHPVWSQQHRTPRWASSIVLGVWISAAALSIPYLIFRETHHDRKGKVTCQNNYAVSTNWESKEMQASRQWIHVACFISRFLLGFLLPFFIIIFCYERVASKVKERSLFKSSKPFKVMMTAIISFFVCWMPYHIHQGLLLTTNQSLLLELTLILTVLTTSFNTIFSPTLYLFVGENFKKVFKKSILALFESTFSEDSSVERTQT.

The Extracellular portion of the chain corresponds to 1-30 (MDLINSTDYLINASTLVRNSTQFLAPASKM). Residues asparagine 5, asparagine 12, and asparagine 19 are each glycosylated (N-linked (GlcNAc...) asparagine). A helical membrane pass occupies residues 31-53 (IIALSLYISSIIGTITNGLYLWV). Topologically, residues 54–64 (LRFKMKQTVNT) are cytoplasmic. A helical transmembrane segment spans residues 65–86 (LLFFHLILSYFISTMILPFMAT). The Extracellular segment spans residues 87–103 (SQLQDNHWNFGTALCKV). The cysteines at positions 101 and 179 are disulfide-linked. The helical transmembrane segment at 104-124 (FNGTLSLGMFTSVFFLSAIGL) threads the bilayer. Over 125 to 143 (DRYLLTLHPVWSQQHRTPR) the chain is Cytoplasmic. The helical transmembrane segment at 144-165 (WASSIVLGVWISAAALSIPYLI) threads the bilayer. Topologically, residues 166–209 (FRETHHDRKGKVTCQNNYAVSTNWESKEMQASRQWIHVACFISR) are extracellular. The helical transmembrane segment at 210–230 (FLLGFLLPFFIIIFCYERVAS) threads the bilayer. Residues 231–246 (KVKERSLFKSSKPFKV) lie on the Cytoplasmic side of the membrane. Residues 247–268 (MMTAIISFFVCWMPYHIHQGLL) traverse the membrane as a helical segment. Residues 269–283 (LTTNQSLLLELTLIL) lie on the Extracellular side of the membrane. A glycan (N-linked (GlcNAc...) asparagine) is linked at asparagine 272. Residues 284–303 (TVLTTSFNTIFSPTLYLFVG) form a helical membrane-spanning segment. Over 304–333 (ENFKKVFKKSILALFESTFSEDSSVERTQT) the chain is Cytoplasmic.

The protein belongs to the G-protein coupled receptor 1 family. In terms of tissue distribution, expressed in spleen, lung, heart, liver, kidney, pancreas, thymus, gonads and leukocytes.

The protein localises to the cell membrane. In terms of biological role, orphan receptor; could be a chemoattractant receptor. This Homo sapiens (Human) protein is Probable G-protein coupled receptor 33 (GPR33).